Consider the following 362-residue polypeptide: Aminomethyltransferase (362 aa).

The protein belongs to the GcvT family. As to quaternary structure, the glycine cleavage system is composed of four proteins: P, T, L and H.

It carries out the reaction N(6)-[(R)-S(8)-aminomethyldihydrolipoyl]-L-lysyl-[protein] + (6S)-5,6,7,8-tetrahydrofolate = N(6)-[(R)-dihydrolipoyl]-L-lysyl-[protein] + (6R)-5,10-methylene-5,6,7,8-tetrahydrofolate + NH4(+). Its function is as follows. The glycine cleavage system catalyzes the degradation of glycine. This chain is Aminomethyltransferase, found in Listeria welshimeri serovar 6b (strain ATCC 35897 / DSM 20650 / CCUG 15529 / CIP 8149 / NCTC 11857 / SLCC 5334 / V8).